Consider the following 517-residue polypeptide: Nicotine N-demethylase CYP82E4 (517 aa).

The chain crosses the membrane as a helical span at residues 2–22; that stretch reads VFPIEAIVGLVTFTFLFFFLW. Residue Lys254 forms a Glycyl lysine isopeptide (Lys-Gly) (interchain with G-Cter in ubiquitin) linkage. Cys457 contacts heme.

Belongs to the cytochrome P450 family. CYP82E2 subfamily. Requires heme as cofactor. Expressed at low levels in green leaves.

The protein resides in the membrane. It catalyses the reaction (S)-nicotine + reduced [NADPH--hemoprotein reductase] + O2 = (S)-nornicotine + formaldehyde + oxidized [NADPH--hemoprotein reductase] + H2O + H(+). It functions in the pathway alkaloid biosynthesis; nicotine biosynthesis. Functionally, involved in the biosynthesis of pyridine alkaloid natural products, leading mainly to the production of anabasine, anatabine, nicotine and nornicotine, effective deterrents against herbivores with antiparasitic and pesticide properties (neurotoxins); nornicotine serves as the precursor in the synthesis of the carcinogen compound N'-nitrosonornicotine (NNN). Catalyzes the demethylation of nicotine to form nornicotine. The protein is Nicotine N-demethylase CYP82E4 of Nicotiana tabacum (Common tobacco).